The following is a 102-amino-acid chain: Probable endoribonuclease MazF2 (102 aa).

The protein belongs to the PemK/MazF family. Forms a complex with cognate antitoxin MazE2.

Its function is as follows. Toxic component of a type II toxin-antitoxin (TA) system. Acts as an endoribonuclease. Neutralized by coexpression with cognate antitoxin MazE2. The sequence is that of Probable endoribonuclease MazF2 (mazF2) from Mycobacterium tuberculosis (strain CDC 1551 / Oshkosh).